The sequence spans 98 residues: NADH-ubiquinone oxidoreductase chain 4L (98 aa).

The next 2 helical transmembrane spans lie at 1-21 (MTLI…GLAL) and 48-68 (PLHL…PFAA).

The protein belongs to the complex I subunit 4L family. Core subunit of respiratory chain NADH dehydrogenase (Complex I) which is composed of 45 different subunits.

The protein localises to the mitochondrion inner membrane. It catalyses the reaction a ubiquinone + NADH + 5 H(+)(in) = a ubiquinol + NAD(+) + 4 H(+)(out). Its function is as follows. Core subunit of the mitochondrial membrane respiratory chain NADH dehydrogenase (Complex I) which catalyzes electron transfer from NADH through the respiratory chain, using ubiquinone as an electron acceptor. Part of the enzyme membrane arm which is embedded in the lipid bilayer and involved in proton translocation. This chain is NADH-ubiquinone oxidoreductase chain 4L (mt-nd4l), found in Xenopus laevis (African clawed frog).